Consider the following 126-residue polypeptide: Holo-[acyl-carrier-protein] synthase (126 aa).

Asp-9 and Glu-58 together coordinate Mg(2+).

Belongs to the P-Pant transferase superfamily. AcpS family. The cofactor is Mg(2+).

It localises to the cytoplasm. It catalyses the reaction apo-[ACP] + CoA = holo-[ACP] + adenosine 3',5'-bisphosphate + H(+). Transfers the 4'-phosphopantetheine moiety from coenzyme A to a Ser of acyl-carrier-protein. In Aliivibrio salmonicida (strain LFI1238) (Vibrio salmonicida (strain LFI1238)), this protein is Holo-[acyl-carrier-protein] synthase.